Here is a 271-residue protein sequence, read N- to C-terminus: uncharacterized protein (271 aa).

It belongs to the HAD-like hydrolase superfamily.

This is an uncharacterized protein from Staphylococcus aureus (strain NCTC 8325 / PS 47).